Consider the following 557-residue polypeptide: Hepatocyte nuclear factor 1-beta (557 aa).

The segment at 1–31 (MVSKLTSLQQELLSALLSSGVTKEVLIQALE) is dimerization. In terms of domain architecture, HNF-p1 spans 1–32 (MVSKLTSLQQELLSALLSSGVTKEVLIQALEE). Phosphoserine is present on residues Ser-49, Ser-52, Ser-75, and Ser-80. The interval 66–85 (TNGHAKGRLSGDEGSEDGDD) is disordered. Residues 93–188 (KELQALNTEE…ILRQFNQTVQ (96 aa)) form the POU-specific atypical domain. Residues 231–311 (MRRNRFKWGP…NRRKEEAFRQ (81 aa)) constitute a DNA-binding region (homeobox; HNF1-type). The tract at residues 324-370 (HNLNPLLTHGSPHHQPSSSPPNKLSGVRYSQPGNNEVTSSSTISHHG) is disordered. Positions 354-370 (QPGNNEVTSSSTISHHG) are enriched in polar residues.

It belongs to the HNF1 homeobox family. Binds DNA as a dimer. Can form homodimer or heterodimer with HNF1-alpha. Interacts (via HNF-p1 domain) with PCBD1; the interaction increases its transactivation activity. In terms of tissue distribution, liver, kidney and intestine.

The protein resides in the nucleus. Its function is as follows. Transcription factor that binds to the inverted palindrome 5'-GTTAATNATTAAC-3'. Binds to the FPC element in the cAMP regulatory unit of the PLAU gene. Transcriptional activity is increased by coactivator PCBD1. The sequence is that of Hepatocyte nuclear factor 1-beta (Hnf1b) from Rattus norvegicus (Rat).